The following is a 138-amino-acid chain: Centromere protein S (138 aa).

Residue M1 is modified to N-acetylmethionine. The segment at 112–138 (AKKKKKLEDENRNSVESAEAGVEESEN) is disordered.

Belongs to the TAF9 family. CENP-S/MHF1 subfamily. Heterodimer with CENPX, sometimes called MHF; this interaction stabilizes both partners. MHF heterodimers can assemble to form tetrameric structures. MHF also coassemble with CENPT-CENPW heterodimers at centromeres to form the tetrameric CENP-T-W-S-X complex. Forms a discrete complex with FANCM and CENPX, called FANCM-MHF; this interaction, probably mediated by direct binding between CENPS and FANCM, leads to synergistic activation of double-stranded DNA binding and strongly stimulates FANCM-mediated DNA remodeling. Recruited by FANCM to the Fanconi anemia (FA) core complex, which consists of CENPS, CENPX, FANCA, FANCB, FANCC, FANCE, FANCF, FANCG, FANCL, FANCM, FAAP24 and FAAP100. The FA core complex associates with Bloom syndrome (BLM) complex, which consists of at least BLM, DNA topoisomerase 3-alpha (TOP3A), RMI1/BLAP75, RPA1/RPA70 and RPA2/RPA32. The super complex between FA and BLM is called BRAFT. Component of the CENPA-CAD complex, composed of CENPI, CENPK, CENPL, CENPO, CENPP, CENPQ, CENPR and CENPS. The CENPA-CAD complex is probably recruited on centromeres by the CENPA-NAC complex, at least composed of CENPA, CENPC, CENPH, CENPM, CENPN, CENPT and CENPU.

It is found in the nucleus. The protein localises to the chromosome. It localises to the centromere. The protein resides in the kinetochore. Its function is as follows. DNA-binding component of the Fanconi anemia (FA) core complex. Required for the normal activation of the FA pathway, leading to monoubiquitination of the FANCI-FANCD2 complex in response to DNA damage, cellular resistance to DNA cross-linking drugs, and prevention of chromosomal breakage. In complex with CENPX (MHF heterodimer), crucial cofactor for FANCM in both binding and ATP-dependent remodeling of DNA. Stabilizes FANCM. In complex with CENPX and FANCM (but not other FANC proteins), rapidly recruited to blocked forks and promotes gene conversion at blocked replication forks. In complex with CENPT, CENPW and CENPX (CENP-T-W-S-X heterotetramer), involved in the formation of a functional kinetochore outer plate, which is essential for kinetochore-microtubule attachment and faithful mitotic progression. As a component of MHF and CENP-T-W-S-X complexes, binds DNA and bends it to form a nucleosome-like structure. DNA-binding function is fulfilled in the presence of CENPX, with the following preference for DNA substates: Holliday junction &gt; double-stranded &gt; splay arm &gt; single-stranded. Does not bind DNA on its own. The polypeptide is Centromere protein S (CENPS) (Bos taurus (Bovine)).